A 256-amino-acid polypeptide reads, in one-letter code: Thiazole synthase (256 aa).

Lys-95 functions as the Schiff-base intermediate with DXP in the catalytic mechanism. 1-deoxy-D-xylulose 5-phosphate-binding positions include Gly-156, 182–183, and 204–205; these read AG and NT.

The protein belongs to the ThiG family. In terms of assembly, homotetramer. Forms heterodimers with either ThiH or ThiS.

The protein resides in the cytoplasm. The catalysed reaction is [ThiS sulfur-carrier protein]-C-terminal-Gly-aminoethanethioate + 2-iminoacetate + 1-deoxy-D-xylulose 5-phosphate = [ThiS sulfur-carrier protein]-C-terminal Gly-Gly + 2-[(2R,5Z)-2-carboxy-4-methylthiazol-5(2H)-ylidene]ethyl phosphate + 2 H2O + H(+). It participates in cofactor biosynthesis; thiamine diphosphate biosynthesis. Its function is as follows. Catalyzes the rearrangement of 1-deoxy-D-xylulose 5-phosphate (DXP) to produce the thiazole phosphate moiety of thiamine. Sulfur is provided by the thiocarboxylate moiety of the carrier protein ThiS. In vitro, sulfur can be provided by H(2)S. In Escherichia coli O7:K1 (strain IAI39 / ExPEC), this protein is Thiazole synthase.